A 480-amino-acid polypeptide reads, in one-letter code: Cobyric acid synthase (480 aa).

Residues 246 to 434 enclose the GATase cobBQ-type domain; that stretch reads KILIAVPILP…VHGLFSELAQ (189 aa). The active-site Nucleophile is C328. H426 is an active-site residue.

Belongs to the CobB/CobQ family. CobQ subfamily.

The protein operates within cofactor biosynthesis; adenosylcobalamin biosynthesis. Its function is as follows. Catalyzes amidations at positions B, D, E, and G on adenosylcobyrinic A,C-diamide. NH(2) groups are provided by glutamine, and one molecule of ATP is hydrogenolyzed for each amidation. This chain is Cobyric acid synthase, found in Methylocella silvestris (strain DSM 15510 / CIP 108128 / LMG 27833 / NCIMB 13906 / BL2).